The chain runs to 1423 residues: MYFLSGWPKRLLCPLGSPAEAPFHVQSDPQRAFFAVLAAARLSIWYSRPSVLIVTYKEPAKSSTQFGSYKQAEWRPDSTMIAVSTANGYILFFHITSTRGDKYLYEPVYPKGSPQMKGTPHFKEEQCAPALNLEMRKILDLQAPIMSLQSVLEDLLVATSDGLLHLIHWEGMTNGRKAINLCTVPFSVDLQSSRVGSFLGFTDVHIRDMEYCATLDGFAVVFNDGKVGFITPVSSRFTAEQLHGVWPQDVVDGTCVAVNNKYRLMAFGCVSGSVQVYTIDNSTGAMLLSHKLELTAKQYPDIWNKTGAVKLMRWSPDNSVVIVTWEYGGLSLWSVFGAQLICTLGGDFAYRSDGTKKDPLKINSMSWGAEGYHLWVISGFGSQNTEIESDLRSVVKQPSILLFQFIKSVLTVNPCMSNQEQVLLQGEDRLYLNCGEASQTQNPRSSSTHSEHKPSREKSPFADGGLESQGLSTLLGHRHWHVVQISSTYLESNWPIRFSAIDKLGQNIAVVGKFGFAHYSLLTKKWKLFGNITQEQNMIVTGGLAWWNDFMVLACYNINDRQEELRVYLRTSNLDNAFAHVTKAQAETLLLSVFQDMVIVFRADCSICLYSIERKSDGPNTTAGIQVLQEVSMSRYIPHPFLVVSVTLTSVSTENGITLKMPQQARGAESIMLNLAGQLIMMQRDRSGPQIREKDSNPNNQRKLLPFCPPVVLAQSVENVWTTCRANKQKRHLLEALWLSCGGAGMKVWLPLFPRDHRKPHSFLSQRIMLPFHINIYPLAVLFEDALVLGAVNDTLLYDSLYTRNNAREQLEVLFPFCVVERTSQIYLHHILRQLLVRNLGEQALLLAQSCATLPYFPHVLELMLHEVLEEEATSREPIPDPLLPTVAKFITEFPLFLQTVVHCARKTEYALWNYLFAAVGNPKDLFEECLMAQDLDTAASYLIILQNMEVPAVSRQHATLLFNTALEQGKWDLCRHMIRFLKAIGSGESETPPSTPTAQEPSSSGGFEFFRNRSISLSQSAENVPASKFSLQKTLSMPSGPSGKRWSKDSDCAENMYIDMMLWRHARRLLEDVRLKDLGCFAAQLGFELISWLCKERTRAARVDNFVIALKRLHKDFLWPLPIIPASSISSPFKNGKYRTVGEQLLKSQSADPFLNLEMDAGISNIQRSQSWLSNIGPTHHEIDTASSHGPQMQDAFLSPLSNKGDECSIGSATDLTESSSMVDGDWTMVDENFSTLSLTQSELEHISMELASKGPHKSQVQLRYLLHIFMEAGCLDWCIVIGLILRESSIINQILVITQSSEVDGEMLQNIKTGLHAVDRWASTDCPGYKPFLNIIKPQLQKLSEITEEQVQPDAFQPITMGKTPEQTSPRAEESRGSSSHGSIPQGEVGSSNMVSRKEEDTAQAEEEEPFQDGTYDCSVS.

WD repeat units lie at residues Thr-64 to Tyr-103 and Asn-304 to Thr-343. Positions Ala-437–Thr-448 are enriched in polar residues. A disordered region spans residues Ala-437–Asp-463. Positions His-449–Pro-460 are enriched in basic and acidic residues. 2 positions are modified to phosphothreonine: Thr-992 and Thr-996. Phosphoserine occurs at positions 1015, 1017, 1019, 1037, and 1172. The tract at residues Pro-1355 to Ser-1423 is disordered. Residues Gly-1379–Val-1397 show a composition bias toward polar residues. Over residues Thr-1404 to Phe-1413 the composition is skewed to acidic residues.

It belongs to the RIC1 family. As to quaternary structure, forms a complex with RGP1; the interaction enhances RAB6A GTPase activity. Interacts (via central domain) with RGP1. Interacts with RAB6A; the interaction is direct with a preference for RAB6A-GDP. Interacts (via C-terminus domain) with RAB33B; the interaction is direct with a preference for RAB33B-GTP. Interacts with GJA1. Present in kidney and various cell lines (at protein level). Widely expressed at low level.

It localises to the cytoplasm. Its subcellular location is the cytosol. It is found in the membrane. The RIC1-RGP1 complex acts as a guanine nucleotide exchange factor (GEF), which activates RAB6A by exchanging bound GDP for free GTP, and may thereby be required for efficient fusion of endosome-derived vesicles with the Golgi compartment. The RIC1-RGP1 complex participates in the recycling of mannose-6-phosphate receptors. Required for phosphorylation and localization of GJA1. Is a regulator of procollagen transport and secretion, and is required for correct cartilage morphogenesis and development of the craniofacial skeleton. The protein is Guanine nucleotide exchange factor subunit RIC1 of Homo sapiens (Human).